We begin with the raw amino-acid sequence, 262 residues long: Type III pantothenate kinase (262 aa).

Residue 6–13 (DVGNTNAV) participates in ATP binding. Residues Tyr-100 and 107–110 (GADR) contribute to the substrate site. Catalysis depends on Asp-109, which acts as the Proton acceptor. K(+) is bound at residue Asp-129. Position 132 (Thr-132) interacts with ATP. A substrate-binding site is contributed by Thr-184.

Belongs to the type III pantothenate kinase family. Homodimer. Requires NH4(+) as cofactor. The cofactor is K(+).

It is found in the cytoplasm. The catalysed reaction is (R)-pantothenate + ATP = (R)-4'-phosphopantothenate + ADP + H(+). It participates in cofactor biosynthesis; coenzyme A biosynthesis; CoA from (R)-pantothenate: step 1/5. Its function is as follows. Catalyzes the phosphorylation of pantothenate (Pan), the first step in CoA biosynthesis. This is Type III pantothenate kinase from Bacillus cytotoxicus (strain DSM 22905 / CIP 110041 / 391-98 / NVH 391-98).